Reading from the N-terminus, the 217-residue chain is tRNA (guanine-N(7)-)-methyltransferase (217 aa).

Residues Glu44, Glu69, Asp96, and Asp118 each contribute to the S-adenosyl-L-methionine site. Asp118 is an active-site residue. Substrate contacts are provided by residues Lys122, Asp154, and 191–194 (TEYE).

Belongs to the class I-like SAM-binding methyltransferase superfamily. TrmB family.

The catalysed reaction is guanosine(46) in tRNA + S-adenosyl-L-methionine = N(7)-methylguanosine(46) in tRNA + S-adenosyl-L-homocysteine. The protein operates within tRNA modification; N(7)-methylguanine-tRNA biosynthesis. Functionally, catalyzes the formation of N(7)-methylguanine at position 46 (m7G46) in tRNA. This chain is tRNA (guanine-N(7)-)-methyltransferase, found in Bacillus cereus (strain G9842).